The following is a 431-amino-acid chain: Enolase (431 aa).

A (2R)-2-phosphoglycerate-binding site is contributed by Gln166. Glu208 functions as the Proton donor in the catalytic mechanism. 3 residues coordinate Mg(2+): Asp245, Glu288, and Asp315. Positions 340, 369, 370, and 391 each coordinate (2R)-2-phosphoglycerate. The active-site Proton acceptor is the Lys340.

Belongs to the enolase family. Requires Mg(2+) as cofactor.

Its subcellular location is the cytoplasm. The protein localises to the secreted. It is found in the cell surface. The catalysed reaction is (2R)-2-phosphoglycerate = phosphoenolpyruvate + H2O. It functions in the pathway carbohydrate degradation; glycolysis; pyruvate from D-glyceraldehyde 3-phosphate: step 4/5. Catalyzes the reversible conversion of 2-phosphoglycerate (2-PG) into phosphoenolpyruvate (PEP). It is essential for the degradation of carbohydrates via glycolysis. This chain is Enolase, found in Clostridium acetobutylicum (strain ATCC 824 / DSM 792 / JCM 1419 / IAM 19013 / LMG 5710 / NBRC 13948 / NRRL B-527 / VKM B-1787 / 2291 / W).